A 700-amino-acid chain; its full sequence is Calpain-2 catalytic subunit (700 aa).

The residue at position 2 (alanine 2) is an N-acetylalanine. The propeptide at 2–19 (AGIAIKLAKDREAAEGLG) is anchors to the small subunit. One can recognise a Calpain catalytic domain in the interval 45–344 (LFQDPSFPAL…YSRLEICNLT (300 aa)). Residues isoleucine 89, glycine 91, and aspartate 96 each contribute to the Ca(2+) site. Cysteine 105 is an active-site residue. 3 residues coordinate Ca(2+): glutamate 175, glutamine 229, and lysine 230. Residues histidine 262 and asparagine 286 contribute to the active site. Residues glutamate 292, aspartate 299, glutamine 319, and glutamate 323 each contribute to the Ca(2+) site. Residues 345–514 (PDTLTCDSYK…KKADYQAVDD (170 aa)) are domain III. A linker region spans residues 515–529 (EIEANIEEIDANEED). Positions 530-700 (IDDGFRRLFV…LASWLSFSVL (171 aa)) are domain IV. Residues alanine 542, aspartate 545, glutamate 547, glutamate 552, aspartate 585, aspartate 587, serine 589, lysine 591, glutamate 596, aspartate 615, aspartate 617, serine 619, threonine 621, glutamate 626, aspartate 658, and asparagine 661 each coordinate Ca(2+). EF-hand domains lie at 572-605 (FSIETCKIMVDMLDEDGSGKLGLKEFYILWTKIQ) and 602-637 (TKIQKYQKIYREIDVDRSGTMNSYEMRKALEEAGFK).

This sequence belongs to the peptidase C2 family. In terms of assembly, forms a heterodimer with a small (regulatory) subunit (CAPNS1). Interacts with CPEB3; this leads to cleavage of CPEB3. Requires Ca(2+) as cofactor. In terms of tissue distribution, ubiquitous.

The protein localises to the cytoplasm. Its subcellular location is the cell membrane. The catalysed reaction is Broad endopeptidase specificity.. With respect to regulation, activated by 200-1000 micromolar concentrations of calcium and inhibited by calpastatin. In terms of biological role, calcium-regulated non-lysosomal thiol-protease which catalyzes limited proteolysis of substrates involved in cytoskeletal remodeling and signal transduction. Proteolytically cleaves MYOC at 'Arg-226'. Proteolytically cleaves CPEB3 following neuronal stimulation which abolishes CPEB3 translational repressor activity, leading to translation of CPEB3 target mRNAs. In Mus musculus (Mouse), this protein is Calpain-2 catalytic subunit (Capn2).